A 61-amino-acid polypeptide reads, in one-letter code: Metallothionein-II, hippocampal (61 aa).

M1 bears the N-acetylmethionine mark. Positions 1–29 (MDPNCSCATGGSCTCANSCTCKACKCASC) are beta. A divalent metal cation contacts are provided by C5, C7, C13, C15, C19, C21, C24, C26, C29, C33, C34, C36, C37, C41, C44, C48, C50, C57, C59, and C60. An alpha region spans residues 30-61 (KKSCCSCCPVGCAKCAQGCICKGASDKCSCCA).

It belongs to the metallothionein superfamily. Type 1 family.

Its function is as follows. Metallothioneins have a high content of cysteine residues that bind various heavy metals; these proteins are transcriptionally regulated by both heavy metals and glucocorticoids. This isoform may play a role in regulating the transport, accumulation, and compartmentation of zinc in the hippocampus. This is Metallothionein-II, hippocampal from Bos taurus (Bovine).